Here is a 246-residue protein sequence, read N- to C-terminus: DNA repair protein RecO (246 aa).

It belongs to the RecO family.

In terms of biological role, involved in DNA repair and RecF pathway recombination. This Proteus mirabilis (strain HI4320) protein is DNA repair protein RecO.